Consider the following 257-residue polypeptide: UPF0246 protein swp_3736 (257 aa).

Belongs to the UPF0246 family.

This chain is UPF0246 protein swp_3736, found in Shewanella piezotolerans (strain WP3 / JCM 13877).